We begin with the raw amino-acid sequence, 248 residues long: Protein STPG4 (248 aa).

As to quaternary structure, interacts with histone H3. Interacts with histone H4.

It localises to the cytoplasm. The protein resides in the nucleus. Functionally, maternal factor that plays a role in epigenetic chromatin reprogramming during early development of the zygote. Involved in the regulation of gametic DNA demethylation by inducing the conversion of the modified genomic base 5-methylcytosine (5mC) into 5-hydroxymethylcytosine (5hmC). The protein is Protein STPG4 of Homo sapiens (Human).